The following is a 142-amino-acid chain: Protein tost-1 (142 aa).

The disordered stretch occupies residues 97–123 (KVFEEEDKENAPTKKAVLKPSSTDEKK).

Component of the tost-1 variant of the PETISCO complex (also called the pid-3, erh-2, tofu-6, and ife-3 small RNA complex) containing at least tost-1, tofu-6, ife-3, pid-3, and erh-2, which plays an essential role in embryogenesis. Within the complex interacts with erh-2. Within the complex interacts with pid-3 and tofu-6. In contrast to the pid-1 variant of the PETISCO complex, the tost-1 variant of the PETISCO complex plays a minor role in the biogenesis of a class of 21 nucleotide PIWI-interacting RNAs (piRNAs) that possess a uracil residue at the 5'-end (also called 21U-RNAs). In terms of tissue distribution, expressed in the germline.

Its subcellular location is the cytoplasm. The protein localises to the nucleus. Its function is as follows. Component of the tost-1 variant of the PETISCO complex which plays an essential role in embryogenesis. Within the complex acts as an adapter which binds to the complex via erh-2. Does not seem to play a role in the biogenesis of a class of 21 nucleotide PIWI-interacting RNAs (piRNAs) that possess a uracil residue at the 5'-end (also called 21U-RNAs). May inhibit 21U-RNA accumulation. Required for chromosome segregation and cell division in early embryos. The protein is Protein tost-1 of Caenorhabditis elegans.